The sequence spans 243 residues: PF03932 family protein CutC (243 aa).

This sequence belongs to the CutC family.

It localises to the cytoplasm. This is PF03932 family protein CutC from Parabacteroides distasonis (strain ATCC 8503 / DSM 20701 / CIP 104284 / JCM 5825 / NCTC 11152).